Here is a 226-residue protein sequence, read N- to C-terminus: Type-5 uracil-DNA glycosylase (226 aa).

[4Fe-4S] cluster is bound by residues Cys-23, Cys-26, Cys-125, and Cys-140.

The protein belongs to the uracil-DNA glycosylase (UDG) superfamily. Type 5 (UDGb) family.

Its function is as follows. DNA glycosylase with broad substrate specificity. Can remove uracil from double-stranded DNA containing either a U/G or U/A base pair. Can also process hydroxymethyluracil (mispaired with guanine or adenine), hypoxanthine and fluorouracil. Exhibits a clear preference for double-stranded DNA substrates, but can also process uracil in single-stranded DNA, with lower efficiency. The sequence is that of Type-5 uracil-DNA glycosylase from Pyrobaculum aerophilum (strain ATCC 51768 / DSM 7523 / JCM 9630 / CIP 104966 / NBRC 100827 / IM2).